The chain runs to 380 residues: Kappa-type opioid receptor (380 aa).

The Extracellular portion of the chain corresponds to 1-57; it reads MESPIQIFRGDPGPTCSPSACLLPNSSSWFPNWAESDSNGSVGSEDQQLESAHISPA. Residues asparagine 25 and asparagine 39 are each glycosylated (N-linked (GlcNAc...) asparagine). A helical membrane pass occupies residues 58–85; sequence IPVIITAVYSVVFVVGLVGNSLVMFVII. The Cytoplasmic segment spans residues 86 to 95; the sequence is RYTKMKTATN. Residues 96–119 traverse the membrane as a helical segment; sequence IYIFNLALADALVTTTMPFQSAVY. Residues 120–132 lie on the Extracellular side of the membrane; the sequence is LMNSWPFGDVLCK. An intrachain disulfide couples cysteine 131 to cysteine 210. A helical transmembrane segment spans residues 133–154; sequence IVISIDYYNMFTSIFTLTMMSV. At 155–173 the chain is on the cytoplasmic side; that stretch reads DRYIAVCHPVKALDFRTPL. Residues 174–196 form a helical membrane-spanning segment; the sequence is KAKIINICIWLLASSVGISAIVL. The Extracellular portion of the chain corresponds to 197-222; it reads GGTKVREDVDVIECSLQFPDDEYSWW. Residues 223–247 traverse the membrane as a helical segment; the sequence is DLFMKICVFVFAFVIPVLIIIVCYT. Residues 248 to 274 lie on the Cytoplasmic side of the membrane; the sequence is LMILRLKSVRLLSGSREKDRNLRRITK. A helical membrane pass occupies residues 275-296; the sequence is LVLVVVAVFIICWTPIHIFILV. The Extracellular segment spans residues 297-311; it reads EALGSTSHSTAALSS. Residues 312 to 333 form a helical membrane-spanning segment; that stretch reads YYFCIALGYTNSSLNPVLYAFL. Residues 334–380 lie on the Cytoplasmic side of the membrane; that stretch reads DENFKRCFRDFCFPIKMRMERQSTNRVRNTVQDPASMRDVGGMNKPV. Cysteine 345 is lipidated: S-palmitoyl cysteine.

It belongs to the G-protein coupled receptor 1 family. In terms of assembly, interacts with NHERF1. Interacts with GABARAPL1. Detected in brain (at protein level). Brain (neocortex, hippocampus, amygdala, medial habenula, hypothalamus, locus ceruleus, and parabrachial nucleus).

It localises to the cell membrane. Functionally, G-protein coupled opioid receptor that functions as a receptor for endogenous alpha-neoendorphins and dynorphins, but has low affinity for beta-endorphins. Also functions as a receptor for various synthetic opioids and for the psychoactive diterpene salvinorin A. Ligand binding causes a conformation change that triggers signaling via guanine nucleotide-binding proteins (G proteins) and modulates the activity of down-stream effectors, such as adenylate cyclase. Signaling leads to the inhibition of adenylate cyclase activity. Inhibits neurotransmitter release by reducing calcium ion currents and increasing potassium ion conductance. Plays a role in the perception of pain. Plays a role in mediating reduced physical activity upon treatment with synthetic opioids. Plays a role in the regulation of salivation in response to synthetic opioids. May play a role in arousal and regulation of autonomic and neuroendocrine functions. The protein is Kappa-type opioid receptor (Oprk1) of Mus musculus (Mouse).